A 123-amino-acid chain; its full sequence is UPF0212 protein rrnAC0441 (123 aa).

This sequence belongs to the UPF0212 family.

The chain is UPF0212 protein rrnAC0441 from Haloarcula marismortui (strain ATCC 43049 / DSM 3752 / JCM 8966 / VKM B-1809) (Halobacterium marismortui).